The following is a 175-amino-acid chain: Nucleoside triphosphate/diphosphate phosphatase (175 aa).

The active-site Proton donor is the Arg23. Residues Asn87, Asp103, Asp105, Asp107, Asp120, and Glu123 each coordinate Mg(2+).

It belongs to the Ntdp family. Mg(2+) serves as cofactor.

The enzyme catalyses a ribonucleoside 5'-triphosphate + H2O = a ribonucleoside 5'-diphosphate + phosphate + H(+). The catalysed reaction is a ribonucleoside 5'-diphosphate + H2O = a ribonucleoside 5'-phosphate + phosphate + H(+). Functionally, has nucleoside phosphatase activity towards nucleoside triphosphates and nucleoside diphosphates. The sequence is that of Nucleoside triphosphate/diphosphate phosphatase from Listeria innocua serovar 6a (strain ATCC BAA-680 / CLIP 11262).